The chain runs to 209 residues: Large ribosomal subunit protein uL3 (209 aa).

The protein belongs to the universal ribosomal protein uL3 family. Part of the 50S ribosomal subunit. Forms a cluster with proteins L14 and L19.

One of the primary rRNA binding proteins, it binds directly near the 3'-end of the 23S rRNA, where it nucleates assembly of the 50S subunit. The chain is Large ribosomal subunit protein uL3 from Nitratidesulfovibrio vulgaris (strain DSM 19637 / Miyazaki F) (Desulfovibrio vulgaris).